Here is a 717-residue protein sequence, read N- to C-terminus: Aryl hydrocarbon receptor nuclear translocator 2 (717 aa).

Disordered regions lie at residues 1-20 (MATP…PGSV) and 35-74 (MAGA…IERR). Omega-N-methylarginine is present on R42. The segment covering 63–73 (FSRENHSEIER) has biased composition (basic and acidic residues). The 54-residue stretch at 63-116 (FSRENHSEIERRRRNKMTQYITELSDMVPTCSALARKPDKLTILRMAVSHMKSM) folds into the bHLH domain. 2 consecutive PAS domains span residues 134 to 209 (TEQE…MTGR) and 323 to 393 (PVCM…VKLK). Positions 398-441 (SVMYRFRTKNREWMLIRTSSFTFQNPYSDEIEYIICTNTNVKQL) constitute a PAC domain. A disordered region spans residues 548–717 (NDIQSSSSTG…DLGMFPPFSE (170 aa)). Polar residues-rich tracts occupy residues 549–574 (DIQS…QVAW) and 585–605 (QIPS…TSHT). Residues 610–625 (PSSYSPLSSPATSSPS) are compositionally biased toward low complexity. The segment covering 642–651 (SGQSSGQFQG) has biased composition (polar residues). Residues 658 to 680 (SQWQSQHHGQQSGEQHSHQQPGQ) show a composition bias toward low complexity.

As to quaternary structure, efficient DNA binding requires dimerization with another bHLH protein. Heterodimer with NPAS4. Heterodimer with SIM1. Heterodimer with the aryl hydrocarbon receptor (AHR) or the SIM1 protein. Interacts with TACC3.

The protein localises to the nucleus. Functionally, transcription factor that plays a role in the development of the hypothalamo-pituitary axis, postnatal brain growth, and visual and renal function. Specifically recognizes the xenobiotic response element (XRE). This is Aryl hydrocarbon receptor nuclear translocator 2 (ARNT2) from Homo sapiens (Human).